Here is a 62-residue protein sequence, read N- to C-terminus: uncharacterized protein (62 aa).

This is an uncharacterized protein from Escherichia coli O157:H7.